Here is a 119-residue protein sequence, read N- to C-terminus: Hydrogenase maturation factor HypA (119 aa).

Histidine 2 is a binding site for Ni(2+). The Zn(2+) site is built by cysteine 73, cysteine 76, cysteine 89, and cysteine 92.

It belongs to the HypA/HybF family.

Involved in the maturation of [NiFe] hydrogenases. Required for nickel insertion into the metal center of the hydrogenase. The protein is Hydrogenase maturation factor HypA of Dehalococcoides mccartyi (strain CBDB1).